A 158-amino-acid chain; its full sequence is uncharacterized protein (158 aa).

The HTH hxlR-type domain maps to 13–110; the sequence is ESVGRALELV…WGDEYLPRPE (98 aa).

This is an uncharacterized protein from Mycobacterium tuberculosis (strain ATCC 25618 / H37Rv).